Consider the following 163-residue polypeptide: Shikimate kinase (163 aa).

Gly-10–Thr-15 serves as a coordination point for ATP. Residue Thr-14 participates in Mg(2+) binding. Substrate-binding residues include Asp-28, Arg-52, and Gly-75. ATP is bound at residue Arg-116. A substrate-binding site is contributed by Arg-134. Arg-151 serves as a coordination point for ATP.

It belongs to the shikimate kinase family. Monomer. Mg(2+) is required as a cofactor.

The protein localises to the cytoplasm. The enzyme catalyses shikimate + ATP = 3-phosphoshikimate + ADP + H(+). The protein operates within metabolic intermediate biosynthesis; chorismate biosynthesis; chorismate from D-erythrose 4-phosphate and phosphoenolpyruvate: step 5/7. In terms of biological role, catalyzes the specific phosphorylation of the 3-hydroxyl group of shikimic acid using ATP as a cosubstrate. This chain is Shikimate kinase, found in Streptococcus pyogenes serotype M12 (strain MGAS2096).